Consider the following 463-residue polypeptide: Protein DML1 (463 aa).

It belongs to the misato family.

The protein localises to the mitochondrion. In terms of biological role, involved in the partitioning of the mitochondrial organelle and mitochondrial DNA (mtDNA) inheritance. This Debaryomyces hansenii (strain ATCC 36239 / CBS 767 / BCRC 21394 / JCM 1990 / NBRC 0083 / IGC 2968) (Yeast) protein is Protein DML1 (DML1).